A 260-amino-acid chain; its full sequence is Trans-aconitate 2-methyltransferase (260 aa).

It belongs to the methyltransferase superfamily. Tam family.

It is found in the cytoplasm. The enzyme catalyses trans-aconitate + S-adenosyl-L-methionine = (E)-3-(methoxycarbonyl)pent-2-enedioate + S-adenosyl-L-homocysteine. In terms of biological role, catalyzes the S-adenosylmethionine monomethyl esterification of trans-aconitate. This chain is Trans-aconitate 2-methyltransferase, found in Methylobacterium radiotolerans (strain ATCC 27329 / DSM 1819 / JCM 2831 / NBRC 15690 / NCIMB 10815 / 0-1).